The primary structure comprises 253 residues: Imidazole glycerol phosphate synthase subunit HisF (253 aa).

Residues Asp11 and Asp130 contribute to the active site.

It belongs to the HisA/HisF family. As to quaternary structure, heterodimer of HisH and HisF.

It is found in the cytoplasm. It catalyses the reaction 5-[(5-phospho-1-deoxy-D-ribulos-1-ylimino)methylamino]-1-(5-phospho-beta-D-ribosyl)imidazole-4-carboxamide + L-glutamine = D-erythro-1-(imidazol-4-yl)glycerol 3-phosphate + 5-amino-1-(5-phospho-beta-D-ribosyl)imidazole-4-carboxamide + L-glutamate + H(+). The protein operates within amino-acid biosynthesis; L-histidine biosynthesis; L-histidine from 5-phospho-alpha-D-ribose 1-diphosphate: step 5/9. Functionally, IGPS catalyzes the conversion of PRFAR and glutamine to IGP, AICAR and glutamate. The HisF subunit catalyzes the cyclization activity that produces IGP and AICAR from PRFAR using the ammonia provided by the HisH subunit. In Geotalea daltonii (strain DSM 22248 / JCM 15807 / FRC-32) (Geobacter daltonii), this protein is Imidazole glycerol phosphate synthase subunit HisF.